A 644-amino-acid polypeptide reads, in one-letter code: MEIPAPEPEKTALSSQDPALSLKENLEDISGWGLPEARSKESVSFKDVAVDFTQEEWGQLDSPQRALYRDVMLENYQNLLALGPPLHKPDVISHLERGEEPWSMQREVPRGPCPEWELKAVPSQQQGICKEEPAQEPIMERPLGGAQAWGRQAGALQRSQAAPWAPAPAMVWDVPVEEFPLRCPLFAQQRVPEGGPLLDTRKNVQATEGRTKAPARLCAGENASTPSEPEKFPQVRRQRGAGAGEGEFVCGECGKAFRQSSSLTLHRRWHSREKAYKCDECGKAFTWSTNLLEHRRIHTGEKPFFCGECGKAFSCHSSLNVHQRIHTGERPYKCSACEKAFSCSSLLSMHLRVHTGEKPYRCGECGKAFNQRTHLTRHHRIHTGEKPYQCGSCGKAFTCHSSLTVHEKIHSGDKPFKCSDCEKAFNSRSRLTLHQRTHTGEKPFKCADCGKGFSCHAYLLVHRRIHSGEKPFKCNECGKAFSSHAYLIVHRRIHTGEKPFDCSQCWKAFSCHSSLIVHQRIHTGEKPYKCSECGRAFSQNHCLIKHQKIHSGEKSFKCEKCGEMFNWSSHLTEHQRLHSEGKPLAIQFNKHLLSTYYVPGSLLGAGDAGLRDVDPIDALDVAKLLCVVPPRAGRNFSLGSKPRN.

The KRAB domain maps to 43–114; the sequence is VSFKDVAVDF…QREVPRGPCP (72 aa). C2H2-type zinc fingers lie at residues 248–270, 276–298, 304–326, 332–354, 360–382, 388–410, 416–438, 444–466, 472–494, 500–522, 528–550, and 556–578; these read FVCG…RRWH, YKCD…RRIH, FFCG…QRIH, YKCS…LRVH, YRCG…HRIH, YQCG…EKIH, FKCS…QRTH, FKCA…RRIH, FKCN…RRIH, FDCS…QRIH, YKCS…QKIH, and FKCE…QRLH. Lys-582 is covalently cross-linked (Glycyl lysine isopeptide (Lys-Gly) (interchain with G-Cter in SUMO2)).

The protein belongs to the krueppel C2H2-type zinc-finger protein family. As to expression, highly expressed in the fetal brain.

The protein localises to the nucleus. Functionally, may play a role in RNA metabolism. This chain is Zinc finger protein 74 (ZNF74), found in Homo sapiens (Human).